Consider the following 189-residue polypeptide: Protein Rex (189 aa).

Residues 1 to 16 (MPKTRRRPRRSQRKRP) are compositionally biased toward basic residues. A disordered region spans residues 1 to 27 (MPKTRRRPRRSQRKRPPTPWPTSQGLD). Residues 2-18 (PKTRRRPRRSQRKRPPT) carry the Nuclear localization signal, and RNA-binding (RxRE) motif. The interval 56-70 (RPAYIVTPYWPPVQS) is homomultimerization. S70 bears the Phosphoserine; by host mark. The Nuclear export signal motif lies at 82–93 (LSAQLYSSLSLD). Positions 87 to 189 (YSSLSLDSPP…PPSPGPSCPM (103 aa)) are disordered. Residues 105–114 (PLRSLPRQSL) show a composition bias toward low complexity. A homomultimerization region spans residues 123–131 (PSSRPCANT). The span at 143–164 (LGSTSQPCLFQTPDSGPKTCTP) shows a compositional bias: polar residues. Phosphothreonine; by host is present on T174. The residue at position 177 (S177) is a Phosphoserine; by host. Positions 178–189 (FPPPSPGPSCPM) are enriched in pro residues.

It belongs to the deltaretrovirus Rex protein family. Homomultimer. Multimeric assembly is essential for activity and involves XPO1. Binds to human XPO1 and KPNB1. Interacts (via N-terminal nuclear localization signal) with human NPM1. Post-translationally, phosphorylated.

It is found in the host nucleus. The protein resides in the host nucleolus. The protein localises to the host cytoplasm. Its function is as follows. Rex escorts unspliced gag-pro-pol and singly spliced env mRNAs out of the nucleus of infected cells. These mRNAs carry a recognition sequence called Rex responsive element (RxRE or XRE) located at the 3' region of the long terminal repeat (LTR). This function is essential since most HTLV proteins are translated from unspliced or partially spliced pre-mRNAs that cannot exit the nucleus by the pathway used by fully processed cellular mRNAs. Rex itself is translated from a fully spliced mRNA that probably readily exits the nucleus. Rex's nuclear localization signal (NLS) binds directly to KPNB1/importin beta-1 without previous binding to KPNA1/importin alpha-1. KPNB1 binds to the GDP bound form of RAN (Ran-GDP) and targets Rex to the nucleus. In the nucleus, the conversion from Ran-GDP to Ran-GTP dissociates Rex from KPNB1 and allows Rex's binding to the RRE in viral pre-mRNAs. Rex multimerizes on the RRE via cooperative assembly. This multimerization is critical for its full biological activity, since it may shield the viral RNA from being spliced or down-regulated, and probably exposes Rex's nuclear export signal (NES) to the surface. Rex can then form a complex with XPO1/CRM1, RANBP3 and Ran-GTP, leading to nuclear export of the complex. Conversion from Ran-GTP to Ran-GDP mediates dissociation of the Rex/RRE/XPO1/RANBP3/RAN complex, so that Rex can return to the nucleus for a subsequent round of export. In Human T-cell leukemia virus 1 (isolate Caribbea HS-35 subtype A) (HTLV-1), this protein is Protein Rex.